We begin with the raw amino-acid sequence, 350 residues long: 3-methylornithine synthase (350 aa).

The Radical SAM core domain occupies 57 to 279; sequence NRVFLNCFIY…PKRLIPASLD (223 aa). Residues C71 and C75 each coordinate [4Fe-4S] cluster. F77 contacts S-adenosyl-L-methionine. C78 is a [4Fe-4S] cluster binding site. Residues D112, S146, and Y169 each contribute to the (3R)-3-methyl-D-ornithine site. Positions 171, 182, and 190 each coordinate S-adenosyl-L-methionine. R235 lines the (3R)-3-methyl-D-ornithine pocket. L240 and Q242 together coordinate S-adenosyl-L-methionine. The (3R)-3-methyl-D-ornithine site is built by S277, T298, and S299.

Belongs to the radical SAM superfamily. PylB family. [4Fe-4S] cluster serves as cofactor. The cofactor is S-adenosyl-L-methionine.

The enzyme catalyses L-lysine = (3R)-3-methyl-D-ornithine. It functions in the pathway amino-acid biosynthesis; L-pyrrolysine biosynthesis. Its function is as follows. Catalyzes the isomerization of L-lysine to (3R)-3-methyl-D-ornithine via a radical-based mechanism, a step in the biosynthesis pathway of pyrrolysine. Also catalyzes the reverse reaction in vitro, converting (3R)-3-methyl-D-ornithine into L-lysine. This is 3-methylornithine synthase from Methanosarcina barkeri (strain Fusaro / DSM 804).